A 183-amino-acid chain; its full sequence is Negative modulator of initiation of replication (183 aa).

The tract at residues 90–91 is interaction with DNA; the sequence is AV.

The protein belongs to the SeqA family. Homodimer. Polymerizes to form helical filaments.

The protein localises to the cytoplasm. In terms of biological role, negative regulator of replication initiation, which contributes to regulation of DNA replication and ensures that replication initiation occurs exactly once per chromosome per cell cycle. Binds to pairs of hemimethylated GATC sequences in the oriC region, thus preventing assembly of replication proteins and re-initiation at newly replicated origins. Repression is relieved when the region becomes fully methylated. This is Negative modulator of initiation of replication from Shewanella oneidensis (strain ATCC 700550 / JCM 31522 / CIP 106686 / LMG 19005 / NCIMB 14063 / MR-1).